Consider the following 1073-residue polypeptide: Probable lipase MIL1 (1073 aa).

Disordered stretches follow at residues 1-151 and 163-190; these read MSDS…AVSS and LTSKVRNSEQASETSPTVPPGKNCKSVN. Composition is skewed to basic and acidic residues over residues 54-81 and 101-121; these read QAKEEVFKRREEDGTRTEDALHEGEAGK and GIDRADKPILLDPFKSVHDTD. The short motif at 143-147 is the APM2-interacting WQEMP motif element; that stretch reads WQEMP. 3 N-linked (GlcNAc...) asparagine glycosylation sites follow: Asn-190, Asn-229, and Asn-236. Residues 230–267 form a disordered region; it reads SSQTSVNLTSSPSTTSLNNEKNNDDDDDDSYDEYEDDV. Residues 233 to 249 are compositionally biased toward low complexity; sequence TSVNLTSSPSTTSLNNE. Over residues 252-267 the composition is skewed to acidic residues; the sequence is NDDDDDDSYDEYEDDV. An N-linked (GlcNAc...) asparagine glycan is attached at Asn-280. A helical membrane pass occupies residues 292-312; that stretch reads FAYVGAINILANQMCTNLATL. Residues 385–448 form a disordered region; that stretch reads NPWENDRDHE…SDVPGKVLDP (64 aa). Over residues 404–427 the composition is skewed to polar residues; sequence RMSPNEQNGSVQASTPDPEQSATP. Asn-411 carries N-linked (GlcNAc...) asparagine glycosylation. Position 435 is a phosphoserine (Ser-435). A helical membrane pass occupies residues 457 to 477; that stretch reads LNIDVAWTIICDLFLICLQSS. N-linked (GlcNAc...) asparagine glycosylation occurs at Asn-495. A run of 2 helical transmembrane segments spans residues 553 to 573 and 577 to 597; these read LVLGLSGGLLAPVIGGGIAAG and IGITGATSFLTGVGGTTVVAV. Asn-726 is a glycosylation site (N-linked (GlcNAc...) asparagine). Residues 818–838 traverse the membrane as a helical segment; the sequence is WFLAYLFRAAAGGFSAVMGIS. An N-linked (GlcNAc...) asparagine glycan is attached at Asn-850. Disordered stretches follow at residues 942–968 and 1010–1073; these read GRDMQDLPENDVNNNENENPDEHEGIA and KEVE…PDDI. Over residues 1027–1037 the composition is skewed to pro residues; the sequence is PSTPKINPPQS. Ser-1037 is subject to Phosphoserine.

It belongs to the TMCO4 family. As to quaternary structure, interacts with RPP0. Interacts with APM2.

Its subcellular location is the golgi apparatus membrane. It is found in the early endosome membrane. It localises to the cytoplasmic vesicle. The protein localises to the clathrin-coated vesicle membrane. Its function is as follows. Probable lipase that recruits the AP-1-related (AP-1R) complex to membranes via interaction with APM2. The AP-1R complex is an adapter protein complex that mediates of cargo protein SNC1 sorting in clathrin-coated vesicles. In Saccharomyces cerevisiae (strain ATCC 204508 / S288c) (Baker's yeast), this protein is Probable lipase MIL1.